The chain runs to 165 residues: ATP synthase subunit b (165 aa).

The chain crosses the membrane as a helical span at residues Ile-5–Ile-27.

Belongs to the ATPase B chain family. In terms of assembly, F-type ATPases have 2 components, F(1) - the catalytic core - and F(0) - the membrane proton channel. F(1) has five subunits: alpha(3), beta(3), gamma(1), delta(1), epsilon(1). F(0) has three main subunits: a(1), b(2) and c(10-14). The alpha and beta chains form an alternating ring which encloses part of the gamma chain. F(1) is attached to F(0) by a central stalk formed by the gamma and epsilon chains, while a peripheral stalk is formed by the delta and b chains.

Its subcellular location is the cell membrane. F(1)F(0) ATP synthase produces ATP from ADP in the presence of a proton or sodium gradient. F-type ATPases consist of two structural domains, F(1) containing the extramembraneous catalytic core and F(0) containing the membrane proton channel, linked together by a central stalk and a peripheral stalk. During catalysis, ATP synthesis in the catalytic domain of F(1) is coupled via a rotary mechanism of the central stalk subunits to proton translocation. In terms of biological role, component of the F(0) channel, it forms part of the peripheral stalk, linking F(1) to F(0). The sequence is that of ATP synthase subunit b from Streptococcus thermophilus (strain CNRZ 1066).